Consider the following 115-residue polypeptide: Chaperone protein PrsD (115 aa).

Belongs to the periplasmic pilus chaperone family.

The protein resides in the periplasm. Mediates assembly of pili by forming soluble multimeric complexes with pili subunits as an intermediate step in the assembly process. The chain is Chaperone protein PrsD (prsD) from Escherichia coli.